We begin with the raw amino-acid sequence, 257 residues long: Small ribosomal subunit protein uS4c (257 aa).

S4 RNA-binding domains are found at residues 110 to 170 (MRLD…QLVN) and 189 to 255 (KTLP…KNYL).

Belongs to the universal ribosomal protein uS4 family. As to quaternary structure, part of the 30S ribosomal subunit. Contacts protein S5. The interaction surface between S4 and S5 is involved in control of translational fidelity.

The protein resides in the plastid. It is found in the chloroplast. One of the primary rRNA binding proteins, it binds directly to 16S rRNA where it nucleates assembly of the body of the 30S subunit. In terms of biological role, with S5 and S12 plays an important role in translational accuracy. In Chlamydomonas reinhardtii (Chlamydomonas smithii), this protein is Small ribosomal subunit protein uS4c (rps4).